The following is a 639-amino-acid chain: Signal recognition particle receptor subunit alpha (639 aa).

A disordered region spans residues A132–T317. Basic and acidic residues-rich tracts occupy residues K137 to K146 and I153 to K165. Position 178 is a phosphoserine (S178). The span at E204–E240 shows a compositional bias: basic and acidic residues. Phosphothreonine is present on T285. A phosphoserine mark is found at S297, S298, and S299. The span at A305–K315 shows a compositional bias: polar residues. Positions Y420 to M637 are NG domain. G426 to S433 contacts GTP. S474 is modified (phosphoserine). D521–R525 provides a ligand contact to GTP. A Phosphothreonine modification is found at T579. T589–D592 lines the GTP pocket.

Belongs to the GTP-binding SRP family. Heterodimer with SRPRB. Interacts with the signal recognition particle (SRP) complex subunit SRP54.

It is found in the endoplasmic reticulum membrane. Functionally, component of the SRP (signal recognition particle) receptor. Ensures, in conjunction with the signal recognition particle, the correct targeting of the nascent secretory proteins to the endoplasmic reticulum membrane system. Forms a guanosine 5'-triphosphate (GTP)-dependent complex with the SRP subunit SRP54. SRP receptor compaction and GTPase rearrangement drive SRP-mediated cotranslational protein translocation into the ER. This Bos taurus (Bovine) protein is Signal recognition particle receptor subunit alpha.